The chain runs to 649 residues: Acetyl-coenzyme A synthetase (649 aa).

CoA-binding positions include 198-201 (RRGK), Thr317, and Asn341. Residues 393–395 (GEP), 417–422 (DTWWQT), Asp506, and Arg521 each bind ATP. A CoA-binding site is contributed by Ser529. ATP is bound at residue Arg532. The Mg(2+) site is built by Val543, His545, and Val548. The residue at position 612 (Lys612) is an N6-acetyllysine. The disordered stretch occupies residues 625 to 649 (QPVQGDTSTLEDPTVLERLQASPAL).

Belongs to the ATP-dependent AMP-binding enzyme family. The cofactor is Mg(2+). Acetylated. Deacetylation by the SIR2-homolog deacetylase activates the enzyme.

It catalyses the reaction acetate + ATP + CoA = acetyl-CoA + AMP + diphosphate. Its function is as follows. Catalyzes the conversion of acetate into acetyl-CoA (AcCoA), an essential intermediate at the junction of anabolic and catabolic pathways. AcsA undergoes a two-step reaction. In the first half reaction, AcsA combines acetate with ATP to form acetyl-adenylate (AcAMP) intermediate. In the second half reaction, it can then transfer the acetyl group from AcAMP to the sulfhydryl group of CoA, forming the product AcCoA. This Deinococcus radiodurans (strain ATCC 13939 / DSM 20539 / JCM 16871 / CCUG 27074 / LMG 4051 / NBRC 15346 / NCIMB 9279 / VKM B-1422 / R1) protein is Acetyl-coenzyme A synthetase.